The chain runs to 147 residues: Large ribosomal subunit protein bL9 (147 aa).

This sequence belongs to the bacterial ribosomal protein bL9 family.

In terms of biological role, binds to the 23S rRNA. This is Large ribosomal subunit protein bL9 from Phocaeicola vulgatus (strain ATCC 8482 / DSM 1447 / JCM 5826 / CCUG 4940 / NBRC 14291 / NCTC 11154) (Bacteroides vulgatus).